The chain runs to 154 residues: Ribonuclease H (154 aa).

One can recognise an RNase H type-1 domain in the interval 5–146 (EQNIVYLYCD…ADELANRGID (142 aa)). Residues aspartate 14, glutamate 52, aspartate 74, and aspartate 138 each coordinate Mg(2+).

Belongs to the RNase H family. In terms of assembly, monomer. Mg(2+) is required as a cofactor.

It localises to the cytoplasm. It carries out the reaction Endonucleolytic cleavage to 5'-phosphomonoester.. Its function is as follows. Endonuclease that specifically degrades the RNA of RNA-DNA hybrids. The protein is Ribonuclease H of Coxiella burnetii (strain CbuK_Q154) (Coxiella burnetii (strain Q154)).